The following is a 44-amino-acid chain: DNA-directed RNA polymerase subunit Rpo12 (44 aa).

The Zn(2+) site is built by C8, C22, and C25.

The protein belongs to the archaeal Rpo12/eukaryotic RPC10 RNA polymerase subunit family. Part of the RNA polymerase complex. Zn(2+) is required as a cofactor.

It is found in the cytoplasm. It catalyses the reaction RNA(n) + a ribonucleoside 5'-triphosphate = RNA(n+1) + diphosphate. DNA-dependent RNA polymerase (RNAP) catalyzes the transcription of DNA into RNA using the four ribonucleoside triphosphates as substrates. In Natronomonas pharaonis (strain ATCC 35678 / DSM 2160 / CIP 103997 / JCM 8858 / NBRC 14720 / NCIMB 2260 / Gabara) (Halobacterium pharaonis), this protein is DNA-directed RNA polymerase subunit Rpo12.